Here is a 149-residue protein sequence, read N- to C-terminus: Aquaporin-like protein 2 (149 aa).

The interval 1-35 (MSNESNDLEKNISHLDPTGVDNAYIPPEQPETKHS) is disordered. Residues 1–47 (MSNESNDLEKNISHLDPTGVDNAYIPPEQPETKHSRFNIDRDTLRNH) are Cytoplasmic-facing. Residues 48–68 (FIAAVGEFCGTFMFLWCAYVI) traverse the membrane as a helical segment. Residues 69–89 (CNVANHDVALTTEPEGSHPGQ) are Extracellular-facing. Residues 90–110 (LIMIALGFGFSVMFSIWCFWW) form a helical membrane-spanning segment. The Cytoplasmic portion of the chain corresponds to 111–149 (GFEPSRFSLFVFGQSHLSSQMCSDVVSSDHCWDGCWWCR).

The protein belongs to the MIP/aquaporin (TC 1.A.8) family.

Its subcellular location is the endoplasmic reticulum membrane. It localises to the cell membrane. In terms of biological role, water channel required to facilitate the transport of water across membranes. Involved in freeze tolerance, osmotolerance and cell flocculation in liquid cultures. Is non-functional in most laboratory strains. The chain is Aquaporin-like protein 2 (AQY2-2) from Saccharomyces cerevisiae (strain RM11-1a) (Baker's yeast).